The chain runs to 512 residues: Glutathione-binding protein GsiB (512 aa).

Positions 1–26 (MARAVHRSGLVALGIATALMASCAFA) are cleaved as a signal peptide.

Belongs to the bacterial solute-binding protein 5 family. The complex is composed of two ATP-binding proteins (GsiA), two transmembrane proteins (GsiC and GsiD) and a solute-binding protein (GsiB). In the presence of glutathione, interacts with the transmembrane proteins GsiC and GsiD.

The protein localises to the periplasm. Part of the ABC transporter complex GsiABCD involved in glutathione import. Binds glutathione. The protein is Glutathione-binding protein GsiB of Escherichia coli (strain K12).